Consider the following 492-residue polypeptide: Bifunctional purine biosynthesis protein PurH (492 aa).

Positions 1–144 (MKKAILSVSN…KNFKHVITVV (144 aa)) constitute an MGS-like domain.

Belongs to the PurH family.

The catalysed reaction is (6R)-10-formyltetrahydrofolate + 5-amino-1-(5-phospho-beta-D-ribosyl)imidazole-4-carboxamide = 5-formamido-1-(5-phospho-D-ribosyl)imidazole-4-carboxamide + (6S)-5,6,7,8-tetrahydrofolate. It carries out the reaction IMP + H2O = 5-formamido-1-(5-phospho-D-ribosyl)imidazole-4-carboxamide. It participates in purine metabolism; IMP biosynthesis via de novo pathway; 5-formamido-1-(5-phospho-D-ribosyl)imidazole-4-carboxamide from 5-amino-1-(5-phospho-D-ribosyl)imidazole-4-carboxamide (10-formyl THF route): step 1/1. Its pathway is purine metabolism; IMP biosynthesis via de novo pathway; IMP from 5-formamido-1-(5-phospho-D-ribosyl)imidazole-4-carboxamide: step 1/1. The polypeptide is Bifunctional purine biosynthesis protein PurH (Staphylococcus saprophyticus subsp. saprophyticus (strain ATCC 15305 / DSM 20229 / NCIMB 8711 / NCTC 7292 / S-41)).